The sequence spans 1340 residues: Serine/threonine-protein phosphatase 7 long form homolog (1340 aa).

Mn(2+) contacts are provided by D660 and H662. The Proton donor role is filled by H722. H773 contributes to the Mn(2+) binding site. 4 disordered regions span residues 788-814, 1012-1093, 1196-1218, and 1266-1340; these read QERN…DRSE, KSMD…SRTR, TDGA…SEDI, and FTNL…DMDS. The segment covering 790–799 has biased composition (basic residues); sequence RNRKRKRTQK. Residues 1018–1027 show a composition bias toward acidic residues; that stretch reads EQMEVDEKDD. Residues 1049–1080 show a composition bias toward basic and acidic residues; the sequence is GDRDMVDFSDKTENGSKEADHSETAEISKDLS. Over residues 1203–1213 the composition is skewed to polar residues; sequence EPSTSKLNYSE. 2 stretches are compositionally biased toward basic and acidic residues: residues 1266–1289 and 1318–1328; these read FTNL…ERVI and DSVDSKNKGSL.

The protein belongs to the PPP phosphatase family. PP-7 subfamily. Mn(2+) serves as cofactor. In terms of tissue distribution, expressed in root tips, the shoot apical meristem (SAM), leaf vasculature, hydathodes and mature flowers.

The protein localises to the nucleus. It carries out the reaction O-phospho-L-seryl-[protein] + H2O = L-seryl-[protein] + phosphate. The enzyme catalyses O-phospho-L-threonyl-[protein] + H2O = L-threonyl-[protein] + phosphate. Functionally, maybe required to maintain cell division activity in meristematic cells. The chain is Serine/threonine-protein phosphatase 7 long form homolog from Arabidopsis thaliana (Mouse-ear cress).